Here is a 324-residue protein sequence, read N- to C-terminus: Fibronectin type III domain-containing protein 8 (324 aa).

Residues 179-280 (PDTPFIFEHT…KPYKFATLAT (102 aa)) form the Fibronectin type-III domain.

This Macaca fascicularis (Crab-eating macaque) protein is Fibronectin type III domain-containing protein 8 (FNDC8).